The chain runs to 236 residues: Small ribosomal subunit protein uS3 (236 aa).

A KH type-2 domain is found at 39–107; sequence IREVLEKQLK…EVHLNIVEVR (69 aa). The segment at 214-236 is disordered; that stretch reads ASERRALEGGDSGGGRSRRDDRG.

This sequence belongs to the universal ribosomal protein uS3 family. As to quaternary structure, part of the 30S ribosomal subunit. Forms a tight complex with proteins S10 and S14.

Binds the lower part of the 30S subunit head. Binds mRNA in the 70S ribosome, positioning it for translation. This is Small ribosomal subunit protein uS3 from Parvibaculum lavamentivorans (strain DS-1 / DSM 13023 / NCIMB 13966).